Here is a 565-residue protein sequence, read N- to C-terminus: NAD-dependent malic enzyme (565 aa).

Tyr104 functions as the Proton donor in the catalytic mechanism. An NAD(+)-binding site is contributed by Arg157. Lys175 functions as the Proton acceptor in the catalytic mechanism. Positions 246, 247, and 270 each coordinate a divalent metal cation. The NAD(+) site is built by Asp270 and Asn418.

Belongs to the malic enzymes family. In terms of assembly, homotetramer. Mg(2+) serves as cofactor. The cofactor is Mn(2+).

It catalyses the reaction (S)-malate + NAD(+) = pyruvate + CO2 + NADH. The catalysed reaction is oxaloacetate + H(+) = pyruvate + CO2. The protein is NAD-dependent malic enzyme of Salmonella newport (strain SL254).